We begin with the raw amino-acid sequence, 106 residues long: Trp operon repressor homolog (106 aa).

The DNA-binding element occupies 59–82 (QREIQQILNTSAATITRGSNMIKI).

It belongs to the TrpR family. In terms of assembly, homodimer.

It is found in the cytoplasm. This protein is an aporepressor. When complexed with L-tryptophan it binds the operator region of the trp operon and prevents the initiation of transcription. In Histophilus somni (strain 2336) (Haemophilus somnus), this protein is Trp operon repressor homolog.